The following is a 70-amino-acid chain: Cold shock-like protein CspB (70 aa).

A CSD domain is found at 7-67; sequence GLVKWFDAGK…GQKGPSAVNV (61 aa).

The protein localises to the cytoplasm. The chain is Cold shock-like protein CspB (cspB) from Yersinia enterocolitica.